A 458-amino-acid polypeptide reads, in one-letter code: Chromosomal replication initiator protein DnaA (458 aa).

The tract at residues 1–79 (MSLAIWQECL…ENPNHSVKIR (79 aa)) is domain I, interacts with DnaA modulators. The interval 79 to 120 (RLMVGNVSSVEKKPAKQIPTQAPLTNQPWEGESKAHRVPHKS) is domain II. The interval 92–114 (PAKQIPTQAPLTNQPWEGESKAH) is disordered. The span at 96–106 (IPTQAPLTNQP) shows a compositional bias: polar residues. The tract at residues 121-338 (NLIKKYTFDN…GAIANISAKA (218 aa)) is domain III, AAA+ region. Residues G165, G167, K168, and T169 each coordinate ATP. The domain IV, binds dsDNA stretch occupies residues 339–458 (QFTGQGITIS…YKILIRTLSM (120 aa)).

It belongs to the DnaA family. Oligomerizes as a right-handed, spiral filament on DNA at oriC.

The protein resides in the cytoplasm. In terms of biological role, plays an essential role in the initiation and regulation of chromosomal replication. ATP-DnaA binds to the origin of replication (oriC) to initiate formation of the DNA replication initiation complex once per cell cycle. Binds the DnaA box (a 9 base pair repeat at the origin) and separates the double-stranded (ds)DNA. Forms a right-handed helical filament on oriC DNA; dsDNA binds to the exterior of the filament while single-stranded (ss)DNA is stabiized in the filament's interior. The ATP-DnaA-oriC complex binds and stabilizes one strand of the AT-rich DNA unwinding element (DUE), permitting loading of DNA polymerase. After initiation quickly degrades to an ADP-DnaA complex that is not apt for DNA replication. Binds acidic phospholipids. The protein is Chromosomal replication initiator protein DnaA of Psychromonas ingrahamii (strain DSM 17664 / CCUG 51855 / 37).